The primary structure comprises 810 residues: RING finger protein unkempt homolog (810 aa).

Residues 1-24 (MSKGPGPGGSAASSAPPAATAQVL) form a disordered region. Residues 10–19 (SAASSAPPAA) are compositionally biased toward low complexity. C3H1-type zinc fingers lie at residues 84–113 (YSPD…HRTT), 124–154 (YYKT…HGPH), 215–241 (NYKT…HNSK), 251–285 (KYRS…HTRT), and 293–321 (IYKS…HVEQ). A disordered region spans residues 239 to 265 (NSKDRRRSPRKHKYRSSPCPNVKHGDE). At Ser-240 the chain carries Phosphoserine. Residues 241-253 (KDRRRSPRKHKYR) show a composition bias toward basic residues. The tract at residues 324 to 343 (LSDDLQPSSTVSSPTQPGPV) is disordered. A compositionally biased stretch (low complexity) spans 329–343 (QPSSTVSSPTQPGPV). Ser-374, Ser-378, and Ser-385 each carry phosphoserine. Residues 569–585 (SASFHSASPSPPVSLSS) show a composition bias toward low complexity. The interval 569–602 (SASFHSASPSPPVSLSSHFLQQPQGHLSQSENTF) is disordered. The span at 586 to 602 (HFLQQPQGHLSQSENTF) shows a compositional bias: polar residues. A Phosphoserine modification is found at Ser-631. Residues 643 to 723 (GAAELARLRQ…QEELERLHSG (81 aa)) adopt a coiled-coil conformation. An RING-type; degenerate zinc finger spans residues 766–801 (SVKCLKCQEQNRAVLPCQHAVLCELCAEGSECPVCQ).

It belongs to the unkempt family.

Its subcellular location is the cytoplasm. In terms of biological role, sequence-specific RNA-binding protein which plays an important role in the establishment and maintenance of the early morphology of cortical neurons during embryonic development. Acts as a translation repressor and controls a translationally regulated cell morphology program to ensure proper structuring of the nervous system. Translational control depends on recognition of its binding element within target mRNAs which consists of a mandatory UAG trimer upstream of a U/A-rich motif. Associated with polysomes. This chain is RING finger protein unkempt homolog (UNK), found in Canis lupus familiaris (Dog).